Reading from the N-terminus, the 495-residue chain is Bifunctional protein GlmU (495 aa).

Residues 1-241 form a pyrophosphorylase region; it reads MTFPGDTAVL…SALVAGVNNR (241 aa). UDP-N-acetyl-alpha-D-glucosamine is bound by residues 12-15, Lys-26, Gln-83, 88-89, 112-114, Gly-151, Glu-166, Asn-181, and Asn-239; these read LAAG, GT, and SGD. Asp-114 contributes to the Mg(2+) binding site. Residue Asn-239 participates in Mg(2+) binding. Residues 242–262 form a linker region; the sequence is VQLAELASELNRRVVAAHQLA. An N-acetyltransferase region spans residues 263–495; sequence GVTVVDPATT…TQPPDADQTP (233 aa). Arg-344 and Lys-362 together coordinate UDP-N-acetyl-alpha-D-glucosamine. The Proton acceptor role is filled by His-374. UDP-N-acetyl-alpha-D-glucosamine-binding residues include Tyr-377 and Asn-388. Residues Ala-391, 397–398, Ser-416, and Ala-434 each bind acetyl-CoA; that span reads NY. Residues 457–495 form a disordered region; that stretch reads IENWVQRKRPGSPAAQASKRASEMACQQPTQPPDADQTP. Over residues 483-495 the composition is skewed to low complexity; sequence QQPTQPPDADQTP.

The protein in the N-terminal section; belongs to the N-acetylglucosamine-1-phosphate uridyltransferase family. In the C-terminal section; belongs to the transferase hexapeptide repeat family. As to quaternary structure, homotrimer. Mg(2+) is required as a cofactor.

The protein resides in the cytoplasm. It catalyses the reaction alpha-D-glucosamine 1-phosphate + acetyl-CoA = N-acetyl-alpha-D-glucosamine 1-phosphate + CoA + H(+). The catalysed reaction is N-acetyl-alpha-D-glucosamine 1-phosphate + UTP + H(+) = UDP-N-acetyl-alpha-D-glucosamine + diphosphate. The protein operates within nucleotide-sugar biosynthesis; UDP-N-acetyl-alpha-D-glucosamine biosynthesis; N-acetyl-alpha-D-glucosamine 1-phosphate from alpha-D-glucosamine 6-phosphate (route II): step 2/2. It participates in nucleotide-sugar biosynthesis; UDP-N-acetyl-alpha-D-glucosamine biosynthesis; UDP-N-acetyl-alpha-D-glucosamine from N-acetyl-alpha-D-glucosamine 1-phosphate: step 1/1. Its pathway is bacterial outer membrane biogenesis; LPS lipid A biosynthesis. Catalyzes the last two sequential reactions in the de novo biosynthetic pathway for UDP-N-acetylglucosamine (UDP-GlcNAc). The C-terminal domain catalyzes the transfer of acetyl group from acetyl coenzyme A to glucosamine-1-phosphate (GlcN-1-P) to produce N-acetylglucosamine-1-phosphate (GlcNAc-1-P), which is converted into UDP-GlcNAc by the transfer of uridine 5-monophosphate (from uridine 5-triphosphate), a reaction catalyzed by the N-terminal domain. The chain is Bifunctional protein GlmU from Mycobacterium tuberculosis (strain ATCC 25177 / H37Ra).